Reading from the N-terminus, the 195-residue chain is ATP-dependent Clp protease proteolytic subunit (195 aa).

Residue serine 101 is the Nucleophile of the active site. The active site involves histidine 126.

The protein belongs to the peptidase S14 family. As to quaternary structure, component of the chloroplastic Clp protease core complex.

The protein resides in the plastid. The protein localises to the chloroplast stroma. The enzyme catalyses Hydrolysis of proteins to small peptides in the presence of ATP and magnesium. alpha-casein is the usual test substrate. In the absence of ATP, only oligopeptides shorter than five residues are hydrolyzed (such as succinyl-Leu-Tyr-|-NHMec, and Leu-Tyr-Leu-|-Tyr-Trp, in which cleavage of the -Tyr-|-Leu- and -Tyr-|-Trp bonds also occurs).. Its function is as follows. Cleaves peptides in various proteins in a process that requires ATP hydrolysis. Has a chymotrypsin-like activity. Plays a major role in the degradation of misfolded proteins. The chain is ATP-dependent Clp protease proteolytic subunit from Cucumis sativus (Cucumber).